Reading from the N-terminus, the 215-residue chain is Interleukin-12 subunit alpha (215 aa).

Residues 1–22 form the signal peptide; that stretch reads MCQSRYLLFLATLVLLNHLTSA. 3 cysteine pairs are disulfide-bonded: Cys-33–Cys-106, Cys-60–Cys-192, and Cys-81–Cys-119. Asn-35, Asn-89, and Asn-167 each carry an N-linked (GlcNAc...) asparagine glycan.

This sequence belongs to the IL-6 superfamily. As to quaternary structure, heterodimer with IL12B; disulfide-linked. This heterodimer is known as interleukin IL-12. Heterodimer with EBI3/IL27B; not disulfide-linked. This heterodimer is known as interleukin IL-35. Interacts with NBR1; this interaction promotes IL-12 secretion.

The protein resides in the secreted. Heterodimerizes with IL12B to form the IL-12 cytokine or with EBI3/IL27B to form the IL-35 cytokine. IL-12 is primarily produced by professional antigen-presenting cells (APCs) such as B-cells and dendritic cells (DCs) as well as macrophages and granulocytes and regulates T-cell and natural killer-cell responses, induces the production of interferon-gamma (IFN-gamma), favors the differentiation of T-helper 1 (Th1) cells and is an important link between innate resistance and adaptive immunity. Mechanistically, exerts its biological effects through a receptor composed of IL12R1 and IL12R2 subunits. Binding to the receptor results in the rapid tyrosine phosphorylation of a number of cellular substrates including the JAK family kinases TYK2 and JAK2. In turn, recruited STAT4 gets phosphorylated and translocates to the nucleus where it regulates cytokine/growth factor responsive genes. As part of IL-35, plays essential roles in maintaining the immune homeostasis of the liver microenvironment and also functions as an immune-suppressive cytokine. Mediates biological events through unconventional receptors composed of IL12RB2 and gp130/IL6ST heterodimers or homodimers. Signaling requires the transcription factors STAT1 and STAT4, which form a unique heterodimer that binds to distinct DNA sites. In Rattus norvegicus (Rat), this protein is Interleukin-12 subunit alpha (Il12a).